Consider the following 546-residue polypeptide: Phosphoglucomutase (546 aa).

The active-site Phosphoserine intermediate is S135. Residues S135, D288, D290, and D292 each contribute to the Mg(2+) site.

Belongs to the phosphohexose mutase family. Requires Mg(2+) as cofactor.

It carries out the reaction alpha-D-glucose 1-phosphate = alpha-D-glucose 6-phosphate. Its pathway is glycolipid metabolism; diglucosyl-diacylglycerol biosynthesis. In terms of biological role, catalyzes the interconversion between glucose-6-phosphate and alpha-glucose-1-phosphate. This is the first step in the biosynthesis of diglucosyl-diacylglycerol (Glc2-DAG), i.e. a glycolipid found in the membrane, which is also used as a membrane anchor for lipoteichoic acid (LTA). In Staphylococcus epidermidis (strain ATCC 35984 / DSM 28319 / BCRC 17069 / CCUG 31568 / BM 3577 / RP62A), this protein is Phosphoglucomutase (pgcA).